The sequence spans 298 residues: Beta-soluble NSF attachment protein (298 aa).

The protein belongs to the SNAP family. Interacts with PRKCABP, and disrupts the interaction between GRIA2 and PRKCABP, leading to the internalization of GRIA2.

The protein resides in the membrane. Its function is as follows. Required for vesicular transport between the endoplasmic reticulum and the Golgi apparatus. This Homo sapiens (Human) protein is Beta-soluble NSF attachment protein (NAPB).